Consider the following 257-residue polypeptide: UPF0246 protein Shew185_1115 (257 aa).

Belongs to the UPF0246 family.

This Shewanella baltica (strain OS185) protein is UPF0246 protein Shew185_1115.